Here is a 353-residue protein sequence, read N- to C-terminus: MAFDDRLERIVARSEEVQALMSSGELTGEDFTRLSQEYAELEPVVASIQAWKSAEEQKAGAQALLDDPEMRELAQMELAEIEATLPDLQHALRLALLPKDAADERSAILEIRPAAGGDEAGLFAAELFDAYRRFSEQNGWRFEVMEYAENEVAGLKEGMATISGRSVFARLKYESGVHRVQRVPATESQGRIHTSTVTVAVLPEAEEVDVTVNDDDLRIDVYRASGAGGQHVNKTESAVRVTHMPSGIVVAMQEEKSQHKNKAKAMKILRARLYERERAQLHATRAADRKSQVGTGDRSERIRTYNFPQGRVTDHRINLTLYKIDRIMGGEFDEIIDALTREEQTELLAAEGF.

At Q230 the chain carries N5-methylglutamine.

Belongs to the prokaryotic/mitochondrial release factor family. Methylated by PrmC. Methylation increases the termination efficiency of RF1.

It is found in the cytoplasm. Functionally, peptide chain release factor 1 directs the termination of translation in response to the peptide chain termination codons UAG and UAA. In Gluconobacter oxydans (strain 621H) (Gluconobacter suboxydans), this protein is Peptide chain release factor 1.